A 309-amino-acid chain; its full sequence is NAD kinase (309 aa).

Asp-89 acts as the Proton acceptor in catalysis. Residues Asp-89–Gly-90, Asn-163–Glu-164, His-174, Arg-191, Asp-193, and Thr-204–Ser-209 each bind NAD(+).

It belongs to the NAD kinase family. A divalent metal cation serves as cofactor.

It localises to the cytoplasm. The catalysed reaction is NAD(+) + ATP = ADP + NADP(+) + H(+). Its function is as follows. Involved in the regulation of the intracellular balance of NAD and NADP, and is a key enzyme in the biosynthesis of NADP. Catalyzes specifically the phosphorylation on 2'-hydroxyl of the adenosine moiety of NAD to yield NADP. This chain is NAD kinase, found in Shewanella frigidimarina (strain NCIMB 400).